The chain runs to 457 residues: MNGTVIPGTPIAVDFWSVRRAGGARLFFLSHMHSDHTVGLSSTWSRPLYCSPLTARLLHHRLKVPTRWIRPLEVGQSHAVGEEVTVTLLDANHCPGSVMFLFEGAFGTILYTGDFRYSPAMQREPALSGRRIDRLYLDNTNCRPHGALPSRSRAALQAAQLIRRHPQHRVVIGVYSLGKEELLVDLALEFGTWVVVSPSRLEQMRLLELPEVFTTEEGAGRIHAVDVAEIRWDTLVSWNVLHPTIAILPTGRPVKVTHPQIHLIPYSDHSSFSELCEFVKWLKPCSVIPIVKGDMCYASFQKYLSPDHQALPGLGIPKPLQVSVQWQSKTKKQKPVCLVKRAAQHSVPKGVVYEPLEEYIEQSDGLGGVTAPQQNSHESAFCSLEDGICFYDCKEEELSGEQPGGAMAAGTAGQSLVSDEDFPSELPKQYLLTPLNALKQSSFCKALKNLFIRWEPS.

Positions 425 to 437 (ELPKQYLLTPLNA) match the TBM motif.

This sequence belongs to the DNA repair metallo-beta-lactamase (DRMBL) family. In terms of assembly, interacts with TERF2; the interaction is direct.

It is found in the chromosome. The protein localises to the telomere. It localises to the nucleus. It carries out the reaction a beta-lactam + H2O = a substituted beta-amino acid. Its function is as follows. 5'-3' exonuclease that plays a central role in telomere maintenance and protection during S-phase. Participates in the protection of telomeres against non-homologous end-joining (NHEJ)-mediated repair, thereby ensuring that telomeres do not fuse. Plays a key role in telomeric loop (T loop) formation by being recruited by TERF2 at the leading end telomeres and by processing leading-end telomeres immediately after their replication via its exonuclease activity: generates 3' single-stranded overhang at the leading end telomeres avoiding blunt leading-end telomeres that are vulnerable to end-joining reactions and expose the telomere end in a manner that activates the DNA repair pathways. May be required for DNA interstrand cross-link repair. Possesses beta-lactamase activity, catalyzing the hydrolysis of penicillin G and nitrocefin. Exhibits no activity towards other beta-lactam antibiotic classes including cephalosporins (cefotaxime) and carbapenems (imipenem). This Gallus gallus (Chicken) protein is 5' exonuclease Apollo (DCLRE1B).